The following is a 319-amino-acid chain: Beta-ketoacyl-[acyl-carrier-protein] synthase III (319 aa).

Catalysis depends on residues Cys-114 and His-246. Residues 247–251 (QANIR) are ACP-binding. The active site involves Asn-276.

The protein belongs to the thiolase-like superfamily. FabH family. In terms of assembly, homodimer.

Its subcellular location is the cytoplasm. It catalyses the reaction malonyl-[ACP] + acetyl-CoA + H(+) = 3-oxobutanoyl-[ACP] + CO2 + CoA. It participates in lipid metabolism; fatty acid biosynthesis. Its function is as follows. Catalyzes the condensation reaction of fatty acid synthesis by the addition to an acyl acceptor of two carbons from malonyl-ACP. Catalyzes the first condensation reaction which initiates fatty acid synthesis and may therefore play a role in governing the total rate of fatty acid production. Possesses both acetoacetyl-ACP synthase and acetyl transacylase activities. Its substrate specificity determines the biosynthesis of branched-chain and/or straight-chain of fatty acids. This Thiobacillus denitrificans (strain ATCC 25259 / T1) protein is Beta-ketoacyl-[acyl-carrier-protein] synthase III.